We begin with the raw amino-acid sequence, 522 residues long: Sorting nexin-1 (522 aa).

2 disordered regions span residues 1-89 (MASG…QDLF) and 115-142 (SLPP…QEDQ). Serine 32 and serine 39 each carry phosphoserine. The segment covering 35–45 (EAGDSDTEGED) has biased composition (acidic residues). A phosphothreonine mark is found at threonine 41 and threonine 48. Phosphoserine occurs at positions 58 and 72. Polar residues predominate over residues 60 to 73 (KRTTSLLPINNGSK). The segment covering 132 to 142 (EELEEEEQEDQ) has biased composition (acidic residues). In terms of domain architecture, PX spans 143-272 (FDLTVGITDP…EFLEKEELPR (130 aa)). A 1,2-diacyl-sn-glycero-3-phospho-(1D-myo-inositol-3-phosphate) contacts are provided by arginine 186, serine 188, and lysine 214. Phosphoserine is present on serine 188. The residue at position 237 (lysine 237) is an N6-acetyllysine. Arginine 238 serves as a coordination point for a 1,2-diacyl-sn-glycero-3-phospho-(1D-myo-inositol-3-phosphate). Serine 280 is modified (phosphoserine). Residues 281-298 (GAGLLKMFNKATDAVSKM) form a membrane-binding amphipathic helix region. In terms of domain architecture, BAR spans 302 to 522 (MNESDIWFEE…AFLPEAKAIS (221 aa)).

Belongs to the sorting nexin family. As to quaternary structure, predominantly forms heterodimers with BAR domain-containing sorting nexins SNX5, SNX6 and SNX32; can self-associate to form homodimers. The heterodimers are proposed to self-assemble into helical arrays on the membrane to stabilize and expand local membrane curvature underlying endosomal tubule formation. Thought to be a component of the originally described retromer complex (also called SNX-BAR retromer) which is a pentamer containing the heterotrimeric retromer cargo-selective complex (CSC), also described as vacuolar protein sorting subcomplex (VPS) and a heterodimeric membrane-deforming subcomplex formed between SNX1 or SNX2 and SNX5 or SNX6 (also called SNX-BAR subcomplex); the respective CSC and SNX-BAR subcomplexes associate with low affinity. Interacts with SNX5, SNX6, SNX32, VPS26A, VPS29, VPS35, DRD5, DENND5A, KALRN, RHOG (GDP-bound form). The interaction with SNX2 is reported controversially. Interacts with DNAJC13; prevented by presence of HGS. Interacts with HGS.

It localises to the endosome membrane. The protein resides in the golgi apparatus. Its subcellular location is the trans-Golgi network membrane. It is found in the early endosome membrane. The protein localises to the cell projection. It localises to the lamellipodium. In terms of biological role, involved in several stages of intracellular trafficking. Interacts with membranes containing phosphatidylinositol 3-phosphate (PtdIns(3P)) or phosphatidylinositol 3,5-bisphosphate (PtdIns(3,5)P2). Acts in part as component of the retromer membrane-deforming SNX-BAR subcomplex. The SNX-BAR retromer mediates retrograde transport of cargo proteins from endosomes to the trans-Golgi network (TGN) and is involved in endosome-to-plasma membrane transport for cargo protein recycling. The SNX-BAR subcomplex functions to deform the donor membrane into a tubular profile called endosome-to-TGN transport carrier (ETC). Can sense membrane curvature and has in vitro vesicle-to-membrane remodeling activity. Involved in retrograde endosome-to-TGN transport of lysosomal enzyme receptors (IGF2R, M6PR and SORT1). Plays a role in targeting ligand-activated EGFR to the lysosomes for degradation after endocytosis from the cell surface and release from the Golgi. Involvement in retromer-independent endocytic trafficking of P2RY1 and lysosomal degradation of protease-activated receptor-1/F2R. Promotes KALRN- and RHOG-dependent but retromer-independent membrane remodeling such as lamellipodium formation; the function is dependent on GEF activity of KALRN. Required for endocytosis of DRD5 upon agonist stimulation but not for basal receptor trafficking. This chain is Sorting nexin-1 (SNX1), found in Macaca fascicularis (Crab-eating macaque).